We begin with the raw amino-acid sequence, 265 residues long: Short chain dehydrogenase mdpC (265 aa).

NADP(+) is bound by residues isoleucine 25, asparagine 98, and arginine 131. Residues serine 147 and serine 148 each act as proton donor in the active site. The NADP(+) site is built by tyrosine 162, lysine 166, and threonine 197. Tyrosine 162 functions as the Proton acceptor in the catalytic mechanism. Lysine 166 serves as the catalytic Lowers pKa of active site Tyr.

The protein belongs to the short-chain dehydrogenases/reductases (SDR) family.

The enzyme catalyses 3,8,9,10-tetrahydroxy-6-methyl-1,4-dihydroanthracen-1-one + NADPH + H(+) = (3R)-3,8,9,10-tetrahydroxy-6-methyl-1,2,3,4-tetrahydroanthracen-1-one + NADP(+). It participates in secondary metabolite biosynthesis. Short chain dehydrogenase; part of the gene cluster that mediates the biosynthesis of monodictyphenone, a prenyl xanthone derivative. The pathway begins with the synthesis of atrochrysone thioester by the polyketide synthase (PKS) mdpG. The atrochrysone carboxyl ACP thioesterase mdpF then breaks the thioester bond and releases the atrochrysone carboxylic acid from mdpG. The atrochrysone carboxylic acid is then converted to atrochrysone which is further transformed into emodin anthrone. The next step is performed by the anthrone oxygenase mdpH that catalyzes the oxidation of emodinanthrone to emodin. Emodin is further modified to yield monodictyphenone via several steps involving mdpB, mdpC mdpJ, mdpK and mdpL. The short chain dehydrogenase mdpC converts the tautomers of emodin hydroquinone into the 3-hydroxy-3,4-dihydroan-thracen-1(2H)-one derivative. These enzymes with xptA, xptB and xptC are also proposed to be involved in the synthesis of shamixanthone from emodin. Especially, direct reduction of emodin by the short chain dehydrogenase mdpC followed by dehydration catalyzed by the scytalone dehydratase-like protein mdpB gives loss of oxygen and formation of chrysophanol intermediate in two simple steps. This Emericella nidulans (strain FGSC A4 / ATCC 38163 / CBS 112.46 / NRRL 194 / M139) (Aspergillus nidulans) protein is Short chain dehydrogenase mdpC.